The primary structure comprises 206 residues: Glycerol-3-phosphate acyltransferase 1 (206 aa).

Transmembrane regions (helical) follow at residues 7 to 27, 54 to 74, 81 to 101, 114 to 134, and 155 to 175; these read LVIG…KIFL, ILTC…VYFI, DLSF…WNHF, IVFF…FLVI, and WINF…IMIF.

This sequence belongs to the PlsY family. Probably interacts with PlsX.

It localises to the cell membrane. The enzyme catalyses an acyl phosphate + sn-glycerol 3-phosphate = a 1-acyl-sn-glycero-3-phosphate + phosphate. The protein operates within lipid metabolism; phospholipid metabolism. Its function is as follows. Catalyzes the transfer of an acyl group from acyl-phosphate (acyl-PO(4)) to glycerol-3-phosphate (G3P) to form lysophosphatidic acid (LPA). This enzyme utilizes acyl-phosphate as fatty acyl donor, but not acyl-CoA or acyl-ACP. The polypeptide is Glycerol-3-phosphate acyltransferase 1 (Lactobacillus johnsonii (strain CNCM I-12250 / La1 / NCC 533)).